The primary structure comprises 505 residues: uncharacterized protein (505 aa).

A disordered region spans residues 1-52 (MVDGSIHVPVQSHEGQHDNSSSLNEEIQTSQDPLGIVESYQESSTSDFDKSH). Positions 18 to 32 (DNSSSLNEEIQTSQD) are enriched in polar residues. Transmembrane regions (helical) follow at residues 141–161 (FWIVFFLGQVLSLCITATNTF), 173–193 (AFQTFLVYALLTLVYTPYTVF), 208–228 (GWKYIIFAFFDVEGNYFVVLA), 235–255 (LSASLLDSWATVAVVILSFIF), 265–285 (ILGVVACIGGLVLLVVSDVIS), 290–310 (SAVNPGLGDGYMIIGATCYGV), 326–346 (VVIGQLSLYGSIISIIQTFIF), 362–382 (GYLAGFILVMFLLYSLAPILF), 389–409 (FYNISLLTSDFWSLVIGIHVF), and 415–435 (WLYPIAFVLIILGLFVYHVFV). Residues Ser-463, Ser-466, and Ser-467 each carry the phosphoserine modification.

The protein belongs to the SLC35F solute transporter family.

The protein localises to the golgi apparatus membrane. This is an uncharacterized protein from Schizosaccharomyces pombe (strain 972 / ATCC 24843) (Fission yeast).